The sequence spans 189 residues: Ribosome maturation factor RimM (189 aa).

Positions 1–16 (MAPSCPTRSRVWSSRT) are enriched in polar residues. The disordered stretch occupies residues 1–21 (MAPSCPTRSRVWSSRTSPPPD). The PRC barrel domain maps to 118-189 (ENEFYWSDLI…TVEVDWGEDY (72 aa)).

The protein belongs to the RimM family. In terms of assembly, binds ribosomal protein uS19.

Its subcellular location is the cytoplasm. In terms of biological role, an accessory protein needed during the final step in the assembly of 30S ribosomal subunit, possibly for assembly of the head region. Essential for efficient processing of 16S rRNA. May be needed both before and after RbfA during the maturation of 16S rRNA. It has affinity for free ribosomal 30S subunits but not for 70S ribosomes. The chain is Ribosome maturation factor RimM from Thiobacillus denitrificans (strain ATCC 25259 / T1).